A 244-amino-acid polypeptide reads, in one-letter code: Uridylate kinase (244 aa).

An ATP-binding site is contributed by 17–20 (KVSG). The interval 25–30 (GEKGFG) is involved in allosteric activation by GTP. UMP is bound at residue glycine 59. 2 residues coordinate ATP: glycine 60 and arginine 64. UMP-binding positions include aspartate 80 and 141–148 (VGNPFFTT). ATP-binding residues include threonine 168, glutamine 169, tyrosine 174, and aspartate 177.

It belongs to the UMP kinase family. As to quaternary structure, homohexamer.

Its subcellular location is the cytoplasm. The enzyme catalyses UMP + ATP = UDP + ADP. The protein operates within pyrimidine metabolism; CTP biosynthesis via de novo pathway; UDP from UMP (UMPK route): step 1/1. Its activity is regulated as follows. Allosterically activated by GTP. Inhibited by UTP. Its function is as follows. Catalyzes the reversible phosphorylation of UMP to UDP. The chain is Uridylate kinase from Ehrlichia canis (strain Jake).